The primary structure comprises 160 residues: Surface-adhesin protein E (160 aa).

A signal peptide spans 1–15 (MKKIILTLSLGLLTA). C16 carries the N-palmitoyl cysteine lipid modification. A lipid anchor (S-diacylglycerol cysteine) is attached at C16.

The protein localises to the cell outer membrane. It is found in the cell surface. Acts as a multifunctional adhesin involved in direct interactions with host epithelial cells and host proteins. This chain is Surface-adhesin protein E (pe), found in Haemophilus influenzae (strain ATCC 51907 / DSM 11121 / KW20 / Rd).